The primary structure comprises 1055 residues: Auxin response factor 16 (1055 aa).

A DNA-binding region (TF-B3) is located at residues 127-229 (FCKTLTASDT…QLLLGIRRAT (103 aa)). Disordered stretches follow at residues 485-510 (PVMSQHQQQPHQLSQQQQVQPSQQSS), 532-565 (QEHLQRQQSQPAQQLKAASSLHSVEQHKLKEQTS), 585-609 (SQLQQLGLPKSPTHRQGLTGLPIAG), 701-720 (SDSIGQLKQSPSQQAPLNHM), and 732-769 (SHSALAESGDPSSSTAPSTSRISPINSLSRANQGSRNL). Composition is skewed to low complexity over residues 488–510 (SQHQQQPHQLSQQQQVQPSQQSS) and 532–552 (QEHLQRQQSQPAQQLKAASSL). The span at 742–756 (PSSSTAPSTSRISPI) shows a compositional bias: low complexity. A compositionally biased stretch (polar residues) spans 757–769 (NSLSRANQGSRNL). Positions 940–1024 (RTFTKVQKRG…KSIKILSAAE (85 aa)) constitute a PB1 domain. The disordered stretch occupies residues 1034–1055 (LGGVPPQTQACSASDDANAWRG).

This sequence belongs to the ARF family. In terms of assembly, homodimers and heterodimers. In terms of tissue distribution, expressed in roots, culms, leaves and young panicles.

It is found in the nucleus. Functionally, auxin response factors (ARFs) are transcriptional factors that bind specifically to the DNA sequence 5'-TGTCTC-3' found in the auxin-responsive promoter elements (AuxREs). This chain is Auxin response factor 16 (ARF16), found in Oryza sativa subsp. japonica (Rice).